The primary structure comprises 559 residues: Formate--tetrahydrofolate ligase (559 aa).

67–74 (TPAGEGKS) lines the ATP pocket.

Belongs to the formate--tetrahydrofolate ligase family.

It catalyses the reaction (6S)-5,6,7,8-tetrahydrofolate + formate + ATP = (6R)-10-formyltetrahydrofolate + ADP + phosphate. Its pathway is one-carbon metabolism; tetrahydrofolate interconversion. The chain is Formate--tetrahydrofolate ligase from Lactobacillus delbrueckii subsp. bulgaricus (strain ATCC 11842 / DSM 20081 / BCRC 10696 / JCM 1002 / NBRC 13953 / NCIMB 11778 / NCTC 12712 / WDCM 00102 / Lb 14).